We begin with the raw amino-acid sequence, 469 residues long: 3-isopropylmalate dehydratase large subunit (469 aa).

3 residues coordinate [4Fe-4S] cluster: Cys-350, Cys-410, and Cys-413.

Belongs to the aconitase/IPM isomerase family. LeuC type 1 subfamily. As to quaternary structure, heterodimer of LeuC and LeuD. Requires [4Fe-4S] cluster as cofactor.

It catalyses the reaction (2R,3S)-3-isopropylmalate = (2S)-2-isopropylmalate. It participates in amino-acid biosynthesis; L-leucine biosynthesis; L-leucine from 3-methyl-2-oxobutanoate: step 2/4. Functionally, catalyzes the isomerization between 2-isopropylmalate and 3-isopropylmalate, via the formation of 2-isopropylmaleate. This Mesorhizobium japonicum (strain LMG 29417 / CECT 9101 / MAFF 303099) (Mesorhizobium loti (strain MAFF 303099)) protein is 3-isopropylmalate dehydratase large subunit.